A 505-amino-acid polypeptide reads, in one-letter code: Surface lipoprotein assembly modifier 2 (505 aa).

Positions 1–19 are cleaved as a signal peptide; sequence MLYFRYGFLVVWCAAGVSA. The N-terminal domain stretch occupies residues 23-188; that stretch reads ADAPAILDDK…RFRKKTEGLT (166 aa). The segment at 189-505 is C-terminal probable beta barrel; that stretch reads GWRFSGGISP…EVFVSADWRF (317 aa). The next 14 beta stranded transmembrane spans lie at 190 to 200, 232 to 243, 248 to 258, 273 to 283, 287 to 297, 326 to 335, 340 to 350, 368 to 377, 381 to 391, 411 to 420, 427 to 437, 456 to 465, 472 to 482, and 495 to 505; these read WRFSGGISPAV, LNYEIEAEKLTP, HYLLFRSNIGG, FGRAYLGWQYK, QTAGILPFYQV, VGVQLSHTYR, WQFSVALEHYR, GFYVSSAKRL, ATVFGGWQFVR, NGVYAGWAQE, LNSRVSASYAR, WNVSLALSHD, IVPALNYRFGR, and SEVFVSADWRF.

Belongs to the Slam family.

Its subcellular location is the cell outer membrane. Functionally, required for correct export to the cell surface of cell outer membrane lipoprotein HpuA heterologously in E.coli (hpuA does not exist in N.meningitidis strain MC58). The chain is Surface lipoprotein assembly modifier 2 from Neisseria meningitidis serogroup B (strain ATCC BAA-335 / MC58).